The chain runs to 992 residues: Aminopeptidase Q (992 aa).

The Cytoplasmic portion of the chain corresponds to 2–13; the sequence is GPPSSSGFYVSR. A helical; Signal-anchor for type II membrane protein membrane pass occupies residues 14–34; that stretch reads AVALLLAALAAALLLALAVLA. At 35–992 the chain is on the extracellular side; it reads ALYGRCARVQ…RMTAWLRKNT (958 aa). The tract at residues 47 to 92 is disordered; it reads DLHHSGVPDAASSPRGTQEEPLPTWPPRPTREPAGTATPGHWRPPG. Asparagine 133 carries N-linked (GlcNAc...) asparagine glycosylation. Substrate is bound at residue glutamate 241. N-linked (GlcNAc...) asparagine glycosylation is found at asparagine 262, asparagine 289, asparagine 347, and asparagine 361. 380–384 is a substrate binding site; the sequence is SAMEN. Histidine 416 is a Zn(2+) binding site. Residue glutamate 417 is the Proton acceptor of the active site. Residues histidine 420 and glutamate 439 each coordinate Zn(2+). The active-site Proton donor is the tyrosine 505. Residues asparagine 555, asparagine 584, asparagine 602, asparagine 609, asparagine 655, asparagine 811, asparagine 850, and asparagine 889 are each glycosylated (N-linked (GlcNAc...) asparagine).

It belongs to the peptidase M1 family. It depends on Zn(2+) as a cofactor. As to expression, expressed in skin. Expression levels do not differ between dark and light skin areas.

It localises to the membrane. Functionally, metalloprotease which may be important for placentation by regulating biological activity of key peptides at the embryo-maternal interface. Involved in coat pigmentation patterns. During skin development, may be required to establish the periodicity of tabby markings, initiating a pre-pattern at or before hair follicle development. The protein is Aminopeptidase Q (LVRN) of Felis catus (Cat).